A 301-amino-acid polypeptide reads, in one-letter code: Probable alpha-L-glutamate ligase 2 (301 aa).

The ATP-grasp domain occupies 104 to 287 (LQLLSRKSIG…VADKIIQFIE (184 aa)). ATP contacts are provided by residues Lys141, 178-179 (EY), Asp187, and 211-213 (RSN). Mg(2+)-binding residues include Asp248, Glu260, and Asn262. Mn(2+)-binding residues include Asp248, Glu260, and Asn262.

This sequence belongs to the RimK family. It depends on Mg(2+) as a cofactor. The cofactor is Mn(2+).

This is Probable alpha-L-glutamate ligase 2 from Shewanella denitrificans (strain OS217 / ATCC BAA-1090 / DSM 15013).